The primary structure comprises 217 residues: MRIFSETEIRIIGCLIEKEITTPEQYPLTLNALTTACNQKSNRDPVTSLTDSDVLDSVNTLIQERIITDETRGNSRVAKYQHRFCNTEFGSLKLSKQELAVLCVLFLRGPQTPGELRTRTQRLCEFDNVAQVENVLNGLSADEHSPKVIKLAKEPGKREARFAHLFCGEVSQAIATVQQAPSESHDNERIVALESDVADLKLEVEELKKLINNLLDK.

This sequence belongs to the UPF0502 family.

This is UPF0502 protein VF_A0604 from Aliivibrio fischeri (strain ATCC 700601 / ES114) (Vibrio fischeri).